A 194-amino-acid polypeptide reads, in one-letter code: MAAAAPNAGGSAPETAGSAEAPLQYSLLLQYLVGDKRQPRLLEPGSLGGIPSPAKSEEQKMIEKAMESCAFKAALACVGGFVLGGAFGVFTAGIDTNVGFDPKDPYRTPTAKEVLKDMGQRGMSYAKNFAIVGAMFSCTECLIESYRGTSDWKNSVISGCITGGAIGFRAGLKAGAIGCGGFAAFSAAIDYYLR.

2 disulfide bridges follow: C69–C141 and C160–C179. The next 3 membrane-spanning stretches (helical) occupy residues 74-94 (ALAC…TAGI), 123-143 (MSYA…ECLI), and 170-190 (AGLK…AAID).

Belongs to the Tim17/Tim22/Tim23 family. In terms of assembly, component of the TIM22 complex, whose core is composed of TIMM22, associated with peripheral protein FXC1/TIMM10B and the 70 kDa heterohexamer. In most cases, the 70 kDa complex is composed of TIMM9 and TIMM10 (TIMM10A or TIMM10B). A small fraction of the 70 kDa complex is composed of TIMM8 (TIMM8A/DDP1 or TIMM8B/DDP2) and TIMM13. The TIM22 complex also contains AGK and TIMM29. Interacts directly with TIMM9, TIMM10A and FXC1/TIMM10B. Interacts (when oxidized) with TIMM29; interaction is direct. In terms of processing, disulfide bonds promote efficient assembly of the TIM22 complex.

It is found in the mitochondrion inner membrane. In terms of biological role, essential core component of the TIM22 complex, a complex that mediates the import and insertion of multi-pass transmembrane proteins into the mitochondrial inner membrane. In the TIM22 complex, it constitutes the voltage-activated and signal-gated channel. Forms a twin-pore translocase that uses the membrane potential as external driving force in 2 voltage-dependent steps. This chain is Mitochondrial import inner membrane translocase subunit Tim22 (TIMM22), found in Homo sapiens (Human).